We begin with the raw amino-acid sequence, 289 residues long: Shikimate dehydrogenase (NADP(+)) (289 aa).

Residues 22–24 (SRS) and threonine 69 contribute to the shikimate site. Catalysis depends on lysine 73, which acts as the Proton acceptor. Glutamate 85 contributes to the NADP(+) binding site. Shikimate-binding residues include asparagine 94 and aspartate 109. NADP(+) is bound by residues 134–138 (GAGGA), 158–163 (NRTLSR), and isoleucine 226. Residue tyrosine 228 coordinates shikimate. Glycine 249 contributes to the NADP(+) binding site.

It belongs to the shikimate dehydrogenase family. In terms of assembly, homodimer.

The catalysed reaction is shikimate + NADP(+) = 3-dehydroshikimate + NADPH + H(+). It functions in the pathway metabolic intermediate biosynthesis; chorismate biosynthesis; chorismate from D-erythrose 4-phosphate and phosphoenolpyruvate: step 4/7. Its function is as follows. Involved in the biosynthesis of the chorismate, which leads to the biosynthesis of aromatic amino acids. Catalyzes the reversible NADPH linked reduction of 3-dehydroshikimate (DHSA) to yield shikimate (SA). The polypeptide is Shikimate dehydrogenase (NADP(+)) (Brucella melitensis biotype 2 (strain ATCC 23457)).